Here is a 355-residue protein sequence, read N- to C-terminus: S-adenosylmethionine:tRNA ribosyltransferase-isomerase (355 aa).

Belongs to the QueA family. Monomer.

It is found in the cytoplasm. It catalyses the reaction 7-aminomethyl-7-carbaguanosine(34) in tRNA + S-adenosyl-L-methionine = epoxyqueuosine(34) in tRNA + adenine + L-methionine + 2 H(+). It participates in tRNA modification; tRNA-queuosine biosynthesis. Its function is as follows. Transfers and isomerizes the ribose moiety from AdoMet to the 7-aminomethyl group of 7-deazaguanine (preQ1-tRNA) to give epoxyqueuosine (oQ-tRNA). The sequence is that of S-adenosylmethionine:tRNA ribosyltransferase-isomerase from Aeromonas hydrophila subsp. hydrophila (strain ATCC 7966 / DSM 30187 / BCRC 13018 / CCUG 14551 / JCM 1027 / KCTC 2358 / NCIMB 9240 / NCTC 8049).